The following is a 306-amino-acid chain: Lipid A biosynthesis lauroyltransferase (306 aa).

A helical membrane pass occupies residues 17-37; the sequence is WLTWLGIGVLWLVVQLPYPVI. The HXXXXD motif motif lies at 132 to 137; that stretch reads HFLTLE.

The protein belongs to the LpxL/LpxM/LpxP family. In terms of assembly, monomer.

Its subcellular location is the cell inner membrane. The catalysed reaction is dodecanoyl-[ACP] + alpha-Kdo-(2-&gt;4)-alpha-Kdo-(2-&gt;6)-lipid IVA (E. coli) = alpha-Kdo-(2-&gt;4)-alpha-Kdo-(2-&gt;6)-(dodecanoyl)-lipid IVA (E. coli) + holo-[ACP]. It functions in the pathway glycolipid biosynthesis; KDO(2)-lipid A biosynthesis; KDO(2)-lipid A from CMP-3-deoxy-D-manno-octulosonate and lipid IV(A): step 3/4. The protein operates within bacterial outer membrane biogenesis; lipopolysaccharide biosynthesis. Its function is as follows. Catalyzes the transfer of laurate from lauroyl-[acyl-carrier-protein] (ACP) to Kdo(2)-lipid IV(A) to form Kdo(2)-(lauroyl)-lipid IV(A). Has 10 fold selectivity for lauroyl-ACP over myristoyl-ACP. In vitro, can also catalyze a slow second acylation reaction leading to the formation of Kdo(2)-(dilauroyl)-lipid IV(A). This chain is Lipid A biosynthesis lauroyltransferase, found in Escherichia coli (strain K12).